A 227-amino-acid chain; its full sequence is Cytochrome c oxidase subunit 2 (227 aa).

The Mitochondrial intermembrane segment spans residues 1–14; the sequence is MAYPFQLGLQDATS. A helical transmembrane segment spans residues 15-45; sequence PIMEELMNFHDHTLMIVFLISSLVLYIISLM. At 46–59 the chain is on the mitochondrial matrix side; the sequence is LTTKLTHTSTMDAQ. A helical transmembrane segment spans residues 60–87; that stretch reads EVETIWTILPAAILILIALPSLRILYMM. The Mitochondrial intermembrane segment spans residues 88–227; the sequence is DEINNPVLTV…YFENWSASMI (140 aa). Cu cation-binding residues include histidine 161, cysteine 196, glutamate 198, cysteine 200, histidine 204, and methionine 207. Position 198 (glutamate 198) interacts with Mg(2+). Tyrosine 218 carries the phosphotyrosine modification.

This sequence belongs to the cytochrome c oxidase subunit 2 family. Component of the cytochrome c oxidase (complex IV, CIV), a multisubunit enzyme composed of 14 subunits. The complex is composed of a catalytic core of 3 subunits MT-CO1, MT-CO2 and MT-CO3, encoded in the mitochondrial DNA, and 11 supernumerary subunits COX4I, COX5A, COX5B, COX6A, COX6B, COX6C, COX7A, COX7B, COX7C, COX8 and NDUFA4, which are encoded in the nuclear genome. The complex exists as a monomer or a dimer and forms supercomplexes (SCs) in the inner mitochondrial membrane with NADH-ubiquinone oxidoreductase (complex I, CI) and ubiquinol-cytochrome c oxidoreductase (cytochrome b-c1 complex, complex III, CIII), resulting in different assemblies (supercomplex SCI(1)III(2)IV(1) and megacomplex MCI(2)III(2)IV(2)). Found in a complex with TMEM177, COA6, COX18, COX20, SCO1 and SCO2. Interacts with TMEM177 in a COX20-dependent manner. Interacts with COX20. Interacts with COX16. The cofactor is Cu cation.

It is found in the mitochondrion inner membrane. It carries out the reaction 4 Fe(II)-[cytochrome c] + O2 + 8 H(+)(in) = 4 Fe(III)-[cytochrome c] + 2 H2O + 4 H(+)(out). Its function is as follows. Component of the cytochrome c oxidase, the last enzyme in the mitochondrial electron transport chain which drives oxidative phosphorylation. The respiratory chain contains 3 multisubunit complexes succinate dehydrogenase (complex II, CII), ubiquinol-cytochrome c oxidoreductase (cytochrome b-c1 complex, complex III, CIII) and cytochrome c oxidase (complex IV, CIV), that cooperate to transfer electrons derived from NADH and succinate to molecular oxygen, creating an electrochemical gradient over the inner membrane that drives transmembrane transport and the ATP synthase. Cytochrome c oxidase is the component of the respiratory chain that catalyzes the reduction of oxygen to water. Electrons originating from reduced cytochrome c in the intermembrane space (IMS) are transferred via the dinuclear copper A center (CU(A)) of subunit 2 and heme A of subunit 1 to the active site in subunit 1, a binuclear center (BNC) formed by heme A3 and copper B (CU(B)). The BNC reduces molecular oxygen to 2 water molecules using 4 electrons from cytochrome c in the IMS and 4 protons from the mitochondrial matrix. The chain is Cytochrome c oxidase subunit 2 (MT-CO2) from Praomys tullbergi (Tullberg's soft-furred rat).